A 578-amino-acid chain; its full sequence is MAYRRKSAFKRAIDEDDVDIIRKLLSYKPIDLNKPGSKNRTILCRAVSMKSHKVAEFLLSNGSKMSACKVPPLIISVRNKDLTMAKILVSYGASVDVCYKGETPLLTAIKTGYIEIIDYLLSLEPSGPYPGHDMIYDKLTLESCSLLIKNNIRLDIPDRYGHTALYYAVKKGNLSLIKLLVENKAITDNIERIKILRRCIVTHYNIEVLKILSLDRDILGTEGTTALHYAVEAERLEAVRYLLDIGCDPKVLDEHSVSPLYYAIKRKNKIILDELIKFYTVEFMVNMDKRTLPLAMYYCSIDELKNLMHGIKDIALSEDYLSELLYESIKTNNPEIVSLILGLGANINKRDLYGNIPLQTAIIYQTDNVFNLLLQKGADVNAKNSDGNTILHTLAACCKYKKIKLVLDLGSDINSVNTNGRTPIEEACPCKKTIRTLISHLIIMIKKNKELIKDPLVIRSVSFINGIEYYKNIMLQCENELNELINQKLVRGYSLFDFVIEKDYNVIARFVNHPKLKVLKQTANVYKELADKNIGMSLTRYTLLERAVLTTEPYLHMLPLEIRSIICCFLSNNELEKL.

ANK repeat units follow at residues 4–34 (RRKS…DLNK), 38–67 (KNRT…KMSA), 68–97 (CKVP…SVDV), 100–129 (KGET…SGPY), 160–189 (YGHT…ITDN), 222–251 (EGTT…DPKV), 255–287 (HSVS…MVNM), 320–349 (YLSE…NINK), 353–382 (YGNI…DVNA), 386–415 (DGNT…DINS), and 419–449 (NGRT…KKNK).

This is Putative ankyrin repeat protein FPV022 from Fowlpox virus (strain NVSL) (FPV).